We begin with the raw amino-acid sequence, 147 residues long: Large ribosomal subunit protein uL15 (147 aa).

Basic residues predominate over residues 1–28 (MIRRRKKVRKLRGSHTHGWGCKKKHRGG). The disordered stretch occupies residues 1 to 43 (MIRRRKKVRKLRGSHTHGWGCKKKHRGGGSKGGRGMAGTGKRN). The span at 29 to 38 (GSKGGRGMAG) shows a compositional bias: gly residues.

It belongs to the universal ribosomal protein uL15 family. Part of the 50S ribosomal subunit.

Functionally, binds to the 23S rRNA. The chain is Large ribosomal subunit protein uL15 from Pyrococcus furiosus (strain ATCC 43587 / DSM 3638 / JCM 8422 / Vc1).